Reading from the N-terminus, the 240-residue chain is Probable transcriptional activator (240 aa).

The tract at residues 17-28 (CTSCQARHGVVC) is essential for the oxygen-regulated activity. The 75-residue stretch at 158-232 (RTAEEKVASL…FRHIIVPDMD (75 aa)) folds into the HTH crp-type domain. The segment at residues 191 to 210 (RAEIADFLGLTIETVSRQMT) is a DNA-binding region (H-T-H motif).

Promotes the microaerobic and symbiotic induction of fixN, possibly by binding to the FNR consensus binding site upstream of fixN. This Rhizobium leguminosarum bv. viciae protein is Probable transcriptional activator (fnrN).